The sequence spans 468 residues: ATP synthase subunit beta 3 (468 aa).

Position 155–162 (155–162) interacts with ATP; that stretch reads GGAGVGKT.

Belongs to the ATPase alpha/beta chains family. In terms of assembly, F-type ATPases have 2 components, CF(1) - the catalytic core - and CF(0) - the membrane proton channel. CF(1) has five subunits: alpha(3), beta(3), gamma(1), delta(1), epsilon(1). CF(0) has three main subunits: a(1), b(2) and c(9-12). The alpha and beta chains form an alternating ring which encloses part of the gamma chain. CF(1) is attached to CF(0) by a central stalk formed by the gamma and epsilon chains, while a peripheral stalk is formed by the delta and b chains.

The protein localises to the cell inner membrane. It catalyses the reaction ATP + H2O + 4 H(+)(in) = ADP + phosphate + 5 H(+)(out). Functionally, produces ATP from ADP in the presence of a proton gradient across the membrane. The catalytic sites are hosted primarily by the beta subunits. This chain is ATP synthase subunit beta 3, found in Syntrophotalea carbinolica (strain DSM 2380 / NBRC 103641 / GraBd1) (Pelobacter carbinolicus).